The following is a 509-amino-acid chain: Sensor histidine kinase TrcS (509 aa).

Transmembrane regions (helical) follow at residues 24–44 (LLLGVLAVVTVVLVAVGVVSV) and 188–208 (VALVGAALVVTAALTVWVVGY). The HAMP domain maps to 207–269 (GYALRPLRRV…LLDNVDGALA (63 aa)). One can recognise a Histidine kinase domain in the interval 284–502 (DASHELRTPL…VFRVRLPMIE (219 aa)). Position 287 is a phosphohistidine; by autocatalysis (H287).

The cofactor is a divalent metal cation. Autophosphorylated.

It is found in the cell membrane. The catalysed reaction is ATP + protein L-histidine = ADP + protein N-phospho-L-histidine.. Functionally, member of the two-component regulatory system TrcS/TrcR. Phosphorylates TrcR. The TrcR-TrcS regulatory system may act as a transition regulatory system involved in adapting to an intracellular environment and transitioning from latency to reactivation. The protein is Sensor histidine kinase TrcS of Mycobacterium tuberculosis (strain ATCC 25618 / H37Rv).